The following is a 391-amino-acid chain: Probable tRNA sulfurtransferase (391 aa).

Positions 60–167 (DEIIDHIKKV…KDNCYVYTDR (108 aa)) constitute a THUMP domain. ATP contacts are provided by residues 185 to 186 (LL), 210 to 211 (HF), R267, G289, and Q298.

Belongs to the ThiI family.

The protein localises to the cytoplasm. The enzyme catalyses [ThiI sulfur-carrier protein]-S-sulfanyl-L-cysteine + a uridine in tRNA + 2 reduced [2Fe-2S]-[ferredoxin] + ATP + H(+) = [ThiI sulfur-carrier protein]-L-cysteine + a 4-thiouridine in tRNA + 2 oxidized [2Fe-2S]-[ferredoxin] + AMP + diphosphate. It carries out the reaction [ThiS sulfur-carrier protein]-C-terminal Gly-Gly-AMP + S-sulfanyl-L-cysteinyl-[cysteine desulfurase] + AH2 = [ThiS sulfur-carrier protein]-C-terminal-Gly-aminoethanethioate + L-cysteinyl-[cysteine desulfurase] + A + AMP + 2 H(+). The protein operates within cofactor biosynthesis; thiamine diphosphate biosynthesis. Its function is as follows. Catalyzes the ATP-dependent transfer of a sulfur to tRNA to produce 4-thiouridine in position 8 of tRNAs, which functions as a near-UV photosensor. Also catalyzes the transfer of sulfur to the sulfur carrier protein ThiS, forming ThiS-thiocarboxylate. This is a step in the synthesis of thiazole, in the thiamine biosynthesis pathway. The sulfur is donated as persulfide by IscS. The sequence is that of Probable tRNA sulfurtransferase from Finegoldia magna (strain ATCC 29328 / DSM 20472 / WAL 2508) (Peptostreptococcus magnus).